The primary structure comprises 165 residues: Anaerobic nitrite reductase GLB1 (165 aa).

The Globin domain occupies 12–162 (VFGEEQEALV…LVAAIKREMK (151 aa)). Residues 45–49 (EIAPS) carry the Homodimerization motif. Ser-55, Lys-69, His-73, Arg-103, Thr-107, and His-108 together coordinate heme b. Positions 115–127 (DGHFEVTGFALLE) match the Homodimerization motif.

It belongs to the plant globin family. Homodimer. Heme b is required as a cofactor. In embryonic organs and at low levels in vegetative organs.

The protein localises to the cytoplasm. It is found in the nucleus. It catalyses the reaction Fe(III)-heme b-[protein] + nitric oxide + H2O = Fe(II)-heme b-[protein] + nitrite + 2 H(+). Phytoglobin that reduces nitrite to nitric oxide (NO) under anoxic conditions (e.g. during flooding or in waterlogged soil). May not function as an oxygen storage or transport protein. Has an unusually high affinity for O(2) through an hexacoordinate heme iron because of a very low dissociation constant. The chain is Anaerobic nitrite reductase GLB1 (HB) from Zea mays (Maize).